The following is a 181-amino-acid chain: Organ-specific protein S2 (181 aa).

4 repeat units span residues 59–84, 85–110, 111–136, and 137–162. The interval 59-162 is 4 X 26 AA tandem repeats; that stretch reads HAKENMGAIG…NASAYGDNEI (104 aa). Positions 94-181 are disordered; sequence GEFEPRPNAS…PRPSMTKYNA (88 aa).

To organ specific protein P4. In terms of tissue distribution, expressed in stems.

This chain is Organ-specific protein S2, found in Pisum sativum (Garden pea).